A 325-amino-acid polypeptide reads, in one-letter code: MALRSPARDYLVSMIGELVGTFLFLFFAFAAAQTANQPNGTKPLTPNATDTSKLLYIALAFGASLAANVWVFFRVSGGQFNPAVTLALVLIRAVSPTKALILIPAQLVGGSLAAAAVKGIIPGDDILFAVSLGPGVANVQGLFIELLLTFMLVFTILMLVAEKTKSTFVAPIGIGFSLFIGHLVGIFWTGAGINPARAFSPALIQASFPSYHWIYWLGPALGSFLAAGLYLGLKEMKYELVGGDADKEKREEGLTVQQADLIIETLRGLPRAIQGSGALGQFEGTTEGHRSPVDLERGAEVRILEDDPHIRKSRYGSPDSTDLPT.

Residues 1 to 10 (MALRSPARDY) are Cytoplasmic-facing. A helical membrane pass occupies residues 11–31 (LVSMIGELVGTFLFLFFAFAA). At 32–52 (AQTANQPNGTKPLTPNATDTS) the chain is on the extracellular side. Asn-39 and Asn-47 each carry an N-linked (GlcNAc...) asparagine glycan. A helical transmembrane segment spans residues 53 to 73 (KLLYIALAFGASLAANVWVFF). The Cytoplasmic segment spans residues 74–100 (RVSGGQFNPAVTLALVLIRAVSPTKAL). The short motif at 81–83 (NPA) is the NPA 1 element. A helical transmembrane segment spans residues 101 to 121 (ILIPAQLVGGSLAAAAVKGII). The Extracellular segment spans residues 122-140 (PGDDILFAVSLGPGVANVQ). Residues 141-161 (GLFIELLLTFMLVFTILMLVA) form a helical membrane-spanning segment. Over 162–167 (EKTKST) the chain is Cytoplasmic. The chain crosses the membrane as a helical span at residues 168 to 188 (FVAPIGIGFSLFIGHLVGIFW). Residues 189–212 (TGAGINPARAFSPALIQASFPSYH) are Extracellular-facing. Positions 194 to 196 (NPA) match the NPA 2 motif. A helical membrane pass occupies residues 213-233 (WIYWLGPALGSFLAAGLYLGL). The Cytoplasmic portion of the chain corresponds to 234-325 (KEMKYELVGG…GSPDSTDLPT (92 aa)). 2 disordered regions span residues 279–298 (LGQF…LERG) and 305–325 (EDDP…DLPT). Basic and acidic residues predominate over residues 286 to 298 (TEGHRSPVDLERG).

Belongs to the MIP/aquaporin (TC 1.A.8) family.

The protein resides in the cell membrane. The catalysed reaction is H2O2(out) = H2O2(in). It catalyses the reaction H2O(in) = H2O(out). Functionally, plasma membrane water channel that regulates the reactive oxygen species (ROS)-signaling pathway through its capacity to act as a membrane channel for hydrogen peroxide uptake. Required for the formation of infection structures and infection, especially on host leaves where it is essential for the penetration into the host. Regulates the expression of proteins related to redox-regulation and intracellular signal transduction and plays a role in the distribution of mitochondria in the hyphae. The chain is Aquaporin-8 from Botryotinia fuckeliana (strain B05.10) (Noble rot fungus).